The primary structure comprises 491 residues: MEFSLLLLLAFLAGLLLLLFRGHPKAHGRLPPGPSPLPVLGNLLQMDRKGLLRSFLRLREKYGDVFTVYLGSRPVVVLCGTDAIREALVDQAEAFSGRGKIAVVDPIFQGYGVIFANGERWRALRRFSLATMRDFGMGKRSVEERIQEEARCLVEELRKSKGALLDNTLLFHSITSNIICSIVFGKRFDYKDPVFLRLLDLFFQSFSLISSFSSQVFELFPGFLKHFPGTHRQIYRNLQEINTFIGQSVEKHRATLDPSNPRDFIDVYLLRMEKDKSDPSSEFHHQNLILTVLSLFFAGTETTSTTLRYGFLLMLKYPHVTERVQKEIEQVIGSHRPPALDDRAKMPYTDAVIHEIQRLGDLIPFGVPHTVTKDTQFRGYVIPKNTEVFPVLSSALHDPRYFETPNTFNPGHFLDANGALKRNEGFMPFSLGKRICLGEGIARTELFLFFTTILQNFSIASPVPPEDIDLTPRESGVGNVPPSYQIRFLAR.

Residue S128 is modified to Phosphoserine; by PKA. Residue C436 coordinates heme.

This sequence belongs to the cytochrome P450 family. Heme serves as cofactor.

The protein resides in the endoplasmic reticulum membrane. It is found in the microsome membrane. It catalyses the reaction an organic molecule + reduced [NADPH--hemoprotein reductase] + O2 = an alcohol + oxidized [NADPH--hemoprotein reductase] + H2O + H(+). Functionally, cytochromes P450 are a group of heme-thiolate monooxygenases. In liver microsomes, this enzyme is involved in an NADPH-dependent electron transport pathway. It oxidizes a variety of structurally unrelated compounds, including steroids, fatty acids, and xenobiotics. In the epoxidation of arachidonic acid it has a unique preference for the 5,6-olefin. This is Cytochrome P450 2B4 (CYP2B4) from Oryctolagus cuniculus (Rabbit).